The chain runs to 316 residues: N-acetylmuramic acid 6-phosphate etherase (316 aa).

The SIS domain maps to 68 to 231 (ITDRLRSGGR…STCAMVRLGK (164 aa)). The active-site Proton donor is the glutamate 96. Residue glutamate 127 is part of the active site.

It belongs to the GCKR-like family. MurNAc-6-P etherase subfamily. In terms of assembly, homodimer.

It catalyses the reaction N-acetyl-D-muramate 6-phosphate + H2O = N-acetyl-D-glucosamine 6-phosphate + (R)-lactate. It functions in the pathway amino-sugar metabolism; N-acetylmuramate degradation. In terms of biological role, specifically catalyzes the cleavage of the D-lactyl ether substituent of MurNAc 6-phosphate, producing GlcNAc 6-phosphate and D-lactate. This is N-acetylmuramic acid 6-phosphate etherase from Prochlorococcus marinus (strain MIT 9303).